The sequence spans 226 residues: UPF0758 protein GK2618 (226 aa).

The MPN domain maps to 104 to 226; the sequence is VIRCPEDGAK…FISLKEKGYV (123 aa). Zn(2+) is bound by residues His-175, His-177, and Asp-188. The JAMM motif signature appears at 175–188; sequence HNHPSGDPTPSRED.

This sequence belongs to the UPF0758 family.

The protein is UPF0758 protein GK2618 of Geobacillus kaustophilus (strain HTA426).